Consider the following 377-residue polypeptide: Probable sensor histidine kinase HK (377 aa).

Disordered stretches follow at residues 1 to 169 (MAHP…RPAD) and 346 to 377 (LPTPRPPFHEELPRITSSDTKDPNREHDTSDQ). The segment covering 10-54 (RLQRRHGARSGSSRCRHRRPVPRRRSRSRPRWRAARAHRRHHRRS) has biased composition (basic residues). A compositionally biased stretch (basic and acidic residues) spans 84–98 (RRPDPRGGANTDHHA). 2 stretches are compositionally biased toward basic residues: residues 99-115 (APRHRRAAAGTSHRRRD) and 137-146 (TTVRRRRQPR). A Histidine kinase domain is found at 146 to 350 (RITHPVGTAD…ELRITLPTPR (205 aa)). H149 is subject to Phosphohistidine; by autocatalysis. Over residues 352-377 (PFHEELPRITSSDTKDPNREHDTSDQ) the composition is skewed to basic and acidic residues.

Post-translationally, autophosphorylated.

It carries out the reaction ATP + protein L-histidine = ADP + protein N-phospho-L-histidine.. In terms of biological role, member of the two-component system HK/TcrA. Phosphorylates TcrA. This Mycobacterium tuberculosis (strain CDC 1551 / Oshkosh) protein is Probable sensor histidine kinase HK.